The primary structure comprises 193 residues: Xanthine phosphoribosyltransferase (193 aa).

Positions 20 and 27 each coordinate xanthine. 128-132 (ANGQA) is a binding site for 5-phospho-alpha-D-ribose 1-diphosphate. K156 serves as a coordination point for xanthine.

This sequence belongs to the purine/pyrimidine phosphoribosyltransferase family. Xpt subfamily. As to quaternary structure, homodimer.

Its subcellular location is the cytoplasm. The catalysed reaction is XMP + diphosphate = xanthine + 5-phospho-alpha-D-ribose 1-diphosphate. It functions in the pathway purine metabolism; XMP biosynthesis via salvage pathway; XMP from xanthine: step 1/1. Its function is as follows. Converts the preformed base xanthine, a product of nucleic acid breakdown, to xanthosine 5'-monophosphate (XMP), so it can be reused for RNA or DNA synthesis. The protein is Xanthine phosphoribosyltransferase of Streptococcus gordonii (strain Challis / ATCC 35105 / BCRC 15272 / CH1 / DL1 / V288).